The primary structure comprises 296 residues: 5,10-methylenetetrahydrofolate reductase (296 aa).

The Proton donor/acceptor role is filled by Glu28. Thr59 lines the NADH pocket. 14 residues coordinate FAD: Tyr60, Ala62, His88, Arg118, Gly119, Asp120, Ala132, Tyr152, His156, Ala159, Asp165, Asn168, Arg171, and Lys172. Position 120 (Asp120) interacts with (6S)-5-methyl-5,6,7,8-tetrahydrofolate. Gln183 provides a ligand contact to NADH. Gln183, Gln219, and Arg279 together coordinate (6S)-5-methyl-5,6,7,8-tetrahydrofolate.

Belongs to the methylenetetrahydrofolate reductase family. Requires FAD as cofactor.

It catalyses the reaction (6S)-5-methyl-5,6,7,8-tetrahydrofolate + NAD(+) = (6R)-5,10-methylene-5,6,7,8-tetrahydrofolate + NADH + H(+). The protein operates within one-carbon metabolism; tetrahydrofolate interconversion. It participates in amino-acid biosynthesis; L-methionine biosynthesis via de novo pathway. In terms of biological role, catalyzes the NADH-dependent reduction of 5,10-methylenetetrahydrofolate to 5-methyltetrahydrofolate. Is required to provide the methyl group necessary for methionine synthetase to convert homocysteine to methionine; the methyl group is given by 5-methyltetrahydrofolate. The polypeptide is 5,10-methylenetetrahydrofolate reductase (metF) (Salmonella typhimurium (strain LT2 / SGSC1412 / ATCC 700720)).